Here is a 584-residue protein sequence, read N- to C-terminus: Ras-specific guanine nucleotide-releasing factor RalGPS1 (584 aa).

Polar residues predominate over residues 1–13 (MDLMNGQSSSVNI). 3 disordered regions span residues 1 to 29 (MDLM…SLSD), 285 to 338 (IEPG…IPHG), and 380 to 407 (HVPS…SELS). The segment covering 14–26 (AATASEKSSSSES) has biased composition (low complexity). The 239-residue stretch at 50-288 (TPEEYAGQIT…YKLSLKIEPG (239 aa)) folds into the Ras-GEF domain. The short motif at 326-329 (PTPP) is the PXXP element. Over residues 388 to 404 (ESSTLSSGISIGSSDGS) the composition is skewed to low complexity. The PH domain maps to 458–570 (AVTIQGVLRR…WFKHLSAACQ (113 aa)).

It is found in the cytoplasm. Its subcellular location is the cell membrane. Functionally, guanine nucleotide exchange factor. May be involved in cytoskeletal organization. The sequence is that of Ras-specific guanine nucleotide-releasing factor RalGPS1 (RALGPS1) from Gallus gallus (Chicken).